The following is a 459-amino-acid chain: Methionine aminopeptidase 2-1 (459 aa).

Residues 1-12 show a composition bias toward basic and acidic residues; that stretch reads MGSKSPEDHRQG. Positions 1–79 are disordered; it reads MGSKSPEDHR…RKRNKKKSKK (79 aa). Over residues 43-54 the composition is skewed to acidic residues; it reads GQDEDGDDDDDE. Positions 67–79 are enriched in basic residues; the sequence is KKKRKRNKKKSKK. H210 contacts substrate. 3 residues coordinate a divalent metal cation: D231, D242, and H311. Substrate is bound at residue H319. Positions 344 and 440 each coordinate a divalent metal cation.

The protein belongs to the peptidase M24A family. Methionine aminopeptidase eukaryotic type 2 subfamily. Co(2+) serves as cofactor. It depends on Zn(2+) as a cofactor. Requires Mn(2+) as cofactor. The cofactor is Fe(2+).

Its subcellular location is the cytoplasm. It carries out the reaction Release of N-terminal amino acids, preferentially methionine, from peptides and arylamides.. Its function is as follows. Cotranslationally removes the N-terminal methionine from nascent proteins. The N-terminal methionine is often cleaved when the second residue in the primary sequence is small and uncharged (Met-Ala-, Cys, Gly, Pro, Ser, Thr, or Val). This chain is Methionine aminopeptidase 2-1, found in Pyrenophora tritici-repentis (strain Pt-1C-BFP) (Wheat tan spot fungus).